A 264-amino-acid polypeptide reads, in one-letter code: Phosphatidylglycerol--prolipoprotein diacylglyceryl transferase (264 aa).

Transmembrane regions (helical) follow at residues 17–37, 57–77, 89–109, and 118–138; these read LAIH…YLLG, LIFY…VLFY, IAFL…VILV, and GVSF…GLGA. Arginine 140 lines the a 1,2-diacyl-sn-glycero-3-phospho-(1'-sn-glycerol) pocket. Transmembrane regions (helical) follow at residues 173 to 193, 201 to 221, and 237 to 257; these read PSQL…LWWF, GQVS…VEFT, and MGQW…VLTA.

The protein belongs to the Lgt family.

Its subcellular location is the cell inner membrane. It catalyses the reaction L-cysteinyl-[prolipoprotein] + a 1,2-diacyl-sn-glycero-3-phospho-(1'-sn-glycerol) = an S-1,2-diacyl-sn-glyceryl-L-cysteinyl-[prolipoprotein] + sn-glycerol 1-phosphate + H(+). Its pathway is protein modification; lipoprotein biosynthesis (diacylglyceryl transfer). In terms of biological role, catalyzes the transfer of the diacylglyceryl group from phosphatidylglycerol to the sulfhydryl group of the N-terminal cysteine of a prolipoprotein, the first step in the formation of mature lipoproteins. This chain is Phosphatidylglycerol--prolipoprotein diacylglyceryl transferase, found in Bordetella avium (strain 197N).